Consider the following 290-residue polypeptide: Signal peptidase I (290 aa).

Topologically, residues 1 to 13 are cytoplasmic; the sequence is MKFLRSVYAFCSS. A helical transmembrane segment spans residues 14–34; that stretch reads WVGTIIIVLLVIFFIAQAFII. The Extracellular segment spans residues 35–290; that stretch reads PSRSMVGTLY…KIIKKEKATH (256 aa). Catalysis depends on residues Ser-38 and Lys-106.

Belongs to the peptidase S26 family.

It is found in the cell membrane. It catalyses the reaction Cleavage of hydrophobic, N-terminal signal or leader sequences from secreted and periplasmic proteins.. This Helicobacter pylori (strain J99 / ATCC 700824) (Campylobacter pylori J99) protein is Signal peptidase I (lepB).